The sequence spans 714 residues: DNA ligase (714 aa).

NAD(+) contacts are provided by residues 47 to 51 (DAEYD), 96 to 97 (SL), and Glu128. The N6-AMP-lysine intermediate role is filled by Lys130. Positions 151, 188, 306, and 330 each coordinate NAD(+). Positions 435, 438, 453, and 459 each coordinate Zn(2+). The BRCT domain maps to 637-714 (RRDTAVAGKT…TEDEWLALIS (78 aa)).

Belongs to the NAD-dependent DNA ligase family. LigA subfamily. Requires Mg(2+) as cofactor. Mn(2+) is required as a cofactor.

It catalyses the reaction NAD(+) + (deoxyribonucleotide)n-3'-hydroxyl + 5'-phospho-(deoxyribonucleotide)m = (deoxyribonucleotide)n+m + AMP + beta-nicotinamide D-nucleotide.. Functionally, DNA ligase that catalyzes the formation of phosphodiester linkages between 5'-phosphoryl and 3'-hydroxyl groups in double-stranded DNA using NAD as a coenzyme and as the energy source for the reaction. It is essential for DNA replication and repair of damaged DNA. The sequence is that of DNA ligase from Rhodopseudomonas palustris (strain HaA2).